The sequence spans 263 residues: 4-hydroxy-tetrahydrodipicolinate reductase (263 aa).

NAD(+) contacts are provided by residues 8 to 13, Asp-34, 99 to 101, and 125 to 128; these read GACGRM, GTT, and SPNY. Catalysis depends on His-157, which acts as the Proton donor/acceptor. Position 158 (His-158) interacts with (S)-2,3,4,5-tetrahydrodipicolinate. Residue Lys-161 is the Proton donor of the active site. 167–168 lines the (S)-2,3,4,5-tetrahydrodipicolinate pocket; sequence GT.

This sequence belongs to the DapB family.

The protein localises to the cytoplasm. It carries out the reaction (S)-2,3,4,5-tetrahydrodipicolinate + NAD(+) + H2O = (2S,4S)-4-hydroxy-2,3,4,5-tetrahydrodipicolinate + NADH + H(+). It catalyses the reaction (S)-2,3,4,5-tetrahydrodipicolinate + NADP(+) + H2O = (2S,4S)-4-hydroxy-2,3,4,5-tetrahydrodipicolinate + NADPH + H(+). It participates in amino-acid biosynthesis; L-lysine biosynthesis via DAP pathway; (S)-tetrahydrodipicolinate from L-aspartate: step 4/4. Its function is as follows. Catalyzes the conversion of 4-hydroxy-tetrahydrodipicolinate (HTPA) to tetrahydrodipicolinate. In Methanosarcina barkeri (strain Fusaro / DSM 804), this protein is 4-hydroxy-tetrahydrodipicolinate reductase.